Here is a 345-residue protein sequence, read N- to C-terminus: Selenide, water dikinase (345 aa).

C16 is a catalytic residue. Residues K19 and 45–47 (TSE) each bind ATP. D48 lines the Mg(2+) pocket. ATP-binding positions include D65, D88, and 136–138 (GHT). D88 contributes to the Mg(2+) binding site. D224 is a binding site for Mg(2+).

It belongs to the selenophosphate synthase 1 family. Class I subfamily. In terms of assembly, homodimer. The cofactor is Mg(2+).

The catalysed reaction is hydrogenselenide + ATP + H2O = selenophosphate + AMP + phosphate + 2 H(+). Its function is as follows. Synthesizes selenophosphate from selenide and ATP. The protein is Selenide, water dikinase of Aliarcobacter butzleri (strain RM4018) (Arcobacter butzleri).